Consider the following 161-residue polypeptide: ATP synthase subunit b 1 (161 aa).

A helical membrane pass occupies residues 6–26; sequence EFYVALGFVIFVAILLYYGVH.

Belongs to the ATPase B chain family. In terms of assembly, F-type ATPases have 2 components, F(1) - the catalytic core - and F(0) - the membrane proton channel. F(1) has five subunits: alpha(3), beta(3), gamma(1), delta(1), epsilon(1). F(0) has three main subunits: a(1), b(2) and c(10-14). The alpha and beta chains form an alternating ring which encloses part of the gamma chain. F(1) is attached to F(0) by a central stalk formed by the gamma and epsilon chains, while a peripheral stalk is formed by the delta and b chains.

The protein localises to the cell inner membrane. F(1)F(0) ATP synthase produces ATP from ADP in the presence of a proton or sodium gradient. F-type ATPases consist of two structural domains, F(1) containing the extramembraneous catalytic core and F(0) containing the membrane proton channel, linked together by a central stalk and a peripheral stalk. During catalysis, ATP synthesis in the catalytic domain of F(1) is coupled via a rotary mechanism of the central stalk subunits to proton translocation. In terms of biological role, component of the F(0) channel, it forms part of the peripheral stalk, linking F(1) to F(0). This Beijerinckia indica subsp. indica (strain ATCC 9039 / DSM 1715 / NCIMB 8712) protein is ATP synthase subunit b 1.